Reading from the N-terminus, the 102-residue chain is Small ribosomal subunit protein uS10 (102 aa).

The protein belongs to the universal ribosomal protein uS10 family. In terms of assembly, part of the 30S ribosomal subunit.

Functionally, involved in the binding of tRNA to the ribosomes. In Enterococcus faecalis (strain ATCC 700802 / V583), this protein is Small ribosomal subunit protein uS10.